Consider the following 68-residue polypeptide: Large ribosomal subunit protein uL29 (68 aa).

Belongs to the universal ribosomal protein uL29 family.

The sequence is that of Large ribosomal subunit protein uL29 from Streptococcus agalactiae serotype Ia (strain ATCC 27591 / A909 / CDC SS700).